We begin with the raw amino-acid sequence, 748 residues long: Catalase-peroxidase (748 aa).

Residues 96–229 constitute a cross-link (tryptophyl-tyrosyl-methioninium (Trp-Tyr) (with M-255)); that stretch reads WHSAGTYRVA…LAAAHMGLIY (134 aa). The Proton acceptor role is filled by His97. The tryptophyl-tyrosyl-methioninium (Tyr-Met) (with W-96) cross-link spans 229 to 255; the sequence is YVNPEGPDGNPDPIAAAKDIRTTFGRM. His270 is a heme b binding site.

The protein belongs to the peroxidase family. Peroxidase/catalase subfamily. As to quaternary structure, homodimer or homotetramer. Requires heme b as cofactor. In terms of processing, formation of the three residue Trp-Tyr-Met cross-link is important for the catalase, but not the peroxidase activity of the enzyme.

It localises to the cytoplasm. The enzyme catalyses H2O2 + AH2 = A + 2 H2O. The catalysed reaction is 2 H2O2 = O2 + 2 H2O. In terms of biological role, bifunctional enzyme with both catalase and broad-spectrum peroxidase activity. Plays a crucial role in oxidative stress response during infection. Acts as an antigen and elicits antibody response in P.marneffei-infected AIDS patients, healthy people working in mycological laboratory, and healthy people in an endemic area. In Talaromyces marneffei (Penicillium marneffei), this protein is Catalase-peroxidase.